An 864-amino-acid chain; its full sequence is Leucine--tRNA ligase (864 aa).

The 'HIGH' region signature appears at Pro-42–His-52. A 'KMSKS' region motif is present at residues Lys-621–Ser-625. Lys-624 is a binding site for ATP.

It belongs to the class-I aminoacyl-tRNA synthetase family.

It localises to the cytoplasm. The enzyme catalyses tRNA(Leu) + L-leucine + ATP = L-leucyl-tRNA(Leu) + AMP + diphosphate. The protein is Leucine--tRNA ligase of Alkalilimnicola ehrlichii (strain ATCC BAA-1101 / DSM 17681 / MLHE-1).